Here is a 222-residue protein sequence, read N- to C-terminus: Glutathione S-transferase A6 (222 aa).

The GST N-terminal domain maps to 3–83; it reads EKPLFHYDEA…YFSSKYNLYG (81 aa). Residues tyrosine 9, arginine 45, 54 to 55, and 67 to 68 each bind glutathione; these read QV and QT. In terms of domain architecture, GST C-terminal spans 85–208; the sequence is DMKERALIDM…QPGSQRQPPV (124 aa).

It belongs to the GST superfamily. Alpha family. Homodimer or heterodimer of GSTA1 and GSTA2.

It localises to the cytoplasm. It catalyses the reaction RX + glutathione = an S-substituted glutathione + a halide anion + H(+). Functionally, conjugation of reduced glutathione to a wide number of exogenous and endogenous hydrophobic electrophiles. This chain is Glutathione S-transferase A6 (Gsta6), found in Rattus norvegicus (Rat).